The sequence spans 496 residues: MASTVSVQPGRIRILKKGSWQPLDQTVGPVVYWMFRDQRLKDNWALIHAVDLANRTNAPVAVVFNLFDQFLDAKARQLGFMLKGLRQLHHQIDSLQIPFFLLQGDAKETIPNFLTECGASHLVTDFSPLREIRRCKDEVVKRTSDSLAIHEVDAHNVVPMWAASSKLEYSARTIRGKINKLLPDYLIEFPKLEPPKKKWTGMMDKKLVDWDSLIDKVVREGAEVPEIEWCVPGEDAGIEVLMGNKDGFLTKRLKNYSTDRNNPIKPKALSGLSPYLHFGQVSAQRCALEARKVRSTSPQAVDTFLEELIVRRELSDNFCYYQPHYDSLKGAWEWARKSLMDHASDKREHIYSLEQLEKGLTADPLWNASQLEMVYQGKMHGFMRMYWAKKILEWTKGPEEALSISIYLNNKYEIDGRDPSGYVGCMWSICGVHDQGWKERPVFGKIRYMNYAGCKRKFNVDSYISYVKSLVSVTKKKRKAEEQLTRDSVDPKITIV.

One can recognise a Photolyase/cryptochrome alpha/beta domain in the interval 28-160 (GPVVYWMFRD…EVDAHNVVPM (133 aa)). Residues tyrosine 256, 269–273 (LSGLS), 307–315 (ELIVRRELS), and 415–417 (DGR) each bind FAD. Glutamate 307 provides a ligand contact to DNA.

This sequence belongs to the DNA photolyase class-2 family. It depends on FAD as a cofactor. Highly expressed in flowers. Expressed in roots and stems.

Its subcellular location is the nucleus. It catalyses the reaction cyclobutadipyrimidine (in DNA) = 2 pyrimidine residues (in DNA).. Its function is as follows. Involved in repair of UV radiation-induced DNA damage. Catalyzes the light-dependent monomerization (300-600 nm) of cyclobutylpyrimidine dimers (CPDs), which are formed between adjacent bases on the same DNA strand upon exposure to ultraviolet radiation. Required for plant survival in the presence of UV-B light. Not involved in the repair of (6-4) photoproducts. The sequence is that of Deoxyribodipyrimidine photo-lyase (PHR1) from Arabidopsis thaliana (Mouse-ear cress).